An 844-amino-acid chain; its full sequence is Protein translocase subunit SecA (844 aa).

ATP is bound by residues Q87, 105–109, and D495; that span reads GEGKT. Positions 783 to 800 are enriched in basic and acidic residues; sequence QAPPEELKQEFKHKEEPK. The interval 783–844 is disordered; sequence QAPPEELKQE…GQKYKKCCGA (62 aa). Residues 802 to 811 are compositionally biased toward polar residues; the sequence is LNYSGAQKET. Positions 816–826 are enriched in basic and acidic residues; it reads PERRGEPKVGR. The Zn(2+) site is built by C830, C832, C841, and C842.

This sequence belongs to the SecA family. Monomer and homodimer. Part of the essential Sec protein translocation apparatus which comprises SecA, SecYEG and auxiliary proteins SecDF-YajC and YidC. It depends on Zn(2+) as a cofactor.

The protein resides in the cell inner membrane. Its subcellular location is the cytoplasm. The enzyme catalyses ATP + H2O + cellular proteinSide 1 = ADP + phosphate + cellular proteinSide 2.. Functionally, part of the Sec protein translocase complex. Interacts with the SecYEG preprotein conducting channel. Has a central role in coupling the hydrolysis of ATP to the transfer of proteins into and across the cell membrane, serving as an ATP-driven molecular motor driving the stepwise translocation of polypeptide chains across the membrane. This Nitratidesulfovibrio vulgaris (strain DSM 19637 / Miyazaki F) (Desulfovibrio vulgaris) protein is Protein translocase subunit SecA.